The sequence spans 883 residues: DNA mismatch repair protein MutS (883 aa).

633 to 640 (GPNMGGKS) provides a ligand contact to ATP.

The protein belongs to the DNA mismatch repair MutS family.

In terms of biological role, this protein is involved in the repair of mismatches in DNA. It is possible that it carries out the mismatch recognition step. This protein has a weak ATPase activity. This chain is DNA mismatch repair protein MutS, found in Bordetella parapertussis (strain 12822 / ATCC BAA-587 / NCTC 13253).